The sequence spans 536 residues: Phosphoenolpyruvate carboxykinase (ATP) (536 aa).

Arg-61, Tyr-195, and Lys-201 together coordinate substrate. ATP contacts are provided by residues Lys-201, His-220, and 236–244; that span reads GLSGTGKTT. The Mn(2+) site is built by Lys-201 and His-220. Asp-257 contacts Mn(2+). Glu-285, Arg-322, and Thr-447 together coordinate ATP. Arg-322 contributes to the substrate binding site.

Belongs to the phosphoenolpyruvate carboxykinase (ATP) family. Requires Mn(2+) as cofactor.

The protein resides in the cytoplasm. The catalysed reaction is oxaloacetate + ATP = phosphoenolpyruvate + ADP + CO2. It functions in the pathway carbohydrate biosynthesis; gluconeogenesis. Involved in the gluconeogenesis. Catalyzes the conversion of oxaloacetate (OAA) to phosphoenolpyruvate (PEP) through direct phosphoryl transfer between the nucleoside triphosphate and OAA. The chain is Phosphoenolpyruvate carboxykinase (ATP) from Rhizobium leguminosarum bv. trifolii (strain WSM2304).